Consider the following 280-residue polypeptide: Energy-coupling factor transporter ATP-binding protein EcfA1 (280 aa).

In terms of domain architecture, ABC transporter spans 6-244; that stretch reads IECKNVVYKY…VPLMKNIGLD (239 aa). An ATP-binding site is contributed by 43–50; sequence GHNGSGKS.

This sequence belongs to the ABC transporter superfamily. Energy-coupling factor EcfA family. Forms a stable energy-coupling factor (ECF) transporter complex composed of 2 membrane-embedded substrate-binding proteins (S component), 2 ATP-binding proteins (A component) and 2 transmembrane proteins (T component).

It localises to the cell membrane. Functionally, ATP-binding (A) component of a common energy-coupling factor (ECF) ABC-transporter complex. Unlike classic ABC transporters this ECF transporter provides the energy necessary to transport a number of different substrates. This Clostridium novyi (strain NT) protein is Energy-coupling factor transporter ATP-binding protein EcfA1.